The following is an 879-amino-acid chain: Metabotropic glutamate receptor 3 (879 aa).

Residues 1-24 (MKMLTRLQVLTLALFSKGFLLSLG) form the signal peptide. Residues 25–577 (DHNFLRREIK…DYIRWEDAWA (553 aa)) lie on the Extracellular side of the membrane. A disulfide bridge links C57 with C99. L-glutamate is bound by residues S151 and 172-174 (AST). N-linked (GlcNAc...) asparagine glycosylation is present at N209. Y222 provides a ligand contact to L-glutamate. 7 cysteine pairs are disulfide-bonded: C240–C527, C361–C373, C412–C419, C509–C528, C513–C531, C534–C546, and C549–C562. Residue N292 is glycosylated (N-linked (GlcNAc...) asparagine). D301 contacts L-glutamate. K389 contacts L-glutamate. Residues N414 and N439 are each glycosylated (N-linked (GlcNAc...) asparagine). A helical membrane pass occupies residues 578-598 (IGPVTIACLGFMCTCMVITVF). The Cytoplasmic segment spans residues 599-613 (IKHNNTPLVKASGRE). A helical membrane pass occupies residues 614–634 (LCYILLFGVGLSYCMTFFFIA). Residues 635 to 688 (KPSPVICALRRLGLGSSFAICYSALLTKTNCIARIFDGVKNGAQRPKFISPSSQ) lie on the Extracellular side of the membrane. A helical transmembrane segment spans residues 689–709 (VFICLGLILVQIVMVSVWLIL). Over 710–735 (EAPGTRRYTLAEKRETVILKCNVKDS) the chain is Cytoplasmic. Residues 736–756 (SMLISLTYDVILVILCTVYAF) traverse the membrane as a helical segment. Over 757 to 769 (KTRKCPENFNEAK) the chain is Extracellular. The chain crosses the membrane as a helical span at residues 770–790 (FIGFTMYTTCIIWLAFLPIFY). Residues 791-807 (VTSSDYRVQTTTMCISV) lie on the Cytoplasmic side of the membrane. A helical transmembrane segment spans residues 808 to 828 (SLSGFVVLGCLFAPKVHIILF). The Extracellular segment spans residues 829 to 879 (QPQKNVVTHRLHLNRFSVSGTGTTYSQSSASMYVPTVCNGREVLDSTTSSL).

Belongs to the G-protein coupled receptor 3 family. Interacts with TAMALIN.

The protein localises to the cell membrane. In terms of biological role, G-protein coupled receptor for glutamate. Ligand binding causes a conformation change that triggers signaling via guanine nucleotide-binding proteins (G proteins) and modulates the activity of down-stream effectors. Signaling inhibits adenylate cyclase activity. The protein is Metabotropic glutamate receptor 3 (GRM3) of Macaca fascicularis (Crab-eating macaque).